The following is a 490-amino-acid chain: Protein twist (490 aa).

Disordered stretches follow at residues 48-74, 98-167, and 330-359; these read QLQH…QHTQ, PSNE…TGGS, and LDGS…ETDE. Positions 54 to 64 are enriched in basic residues; sequence QHLHSHQHHQQ. Composition is skewed to low complexity over residues 65 to 74 and 104 to 135; these read HQQQQQQHTQ and STSS…NNPS. Residues 339–351 are compositionally biased toward basic residues; it reads AFRKPRRRLKRKP. The 52-residue stretch at 362 to 413 folds into the bHLH domain; it reads NQRVMANVRERQRTQSLNDAFKSLQQIIPTLPSDKLSKIQTLKLATRYIDFL.

As to quaternary structure, efficient DNA binding requires dimerization with another bHLH protein. Homodimer.

Its subcellular location is the nucleus. In terms of biological role, involved in the establishment and dorsoventral patterning of germ layers in the embryo. This chain is Protein twist, found in Drosophila erecta (Fruit fly).